The sequence spans 91 residues: Acylphosphatase (91 aa).

The region spanning 5–91 (RAHLRIYGRV…EGLEGFKVVG (87 aa)) is the Acylphosphatase-like domain. Active-site residues include Arg-20 and Asn-38.

This sequence belongs to the acylphosphatase family.

The enzyme catalyses an acyl phosphate + H2O = a carboxylate + phosphate + H(+). The protein is Acylphosphatase (acyP) of Thermococcus kodakarensis (strain ATCC BAA-918 / JCM 12380 / KOD1) (Pyrococcus kodakaraensis (strain KOD1)).